A 229-amino-acid polypeptide reads, in one-letter code: Dephospho-CoA kinase domain-containing protein (229 aa).

The 205-residue stretch at 3 to 207 (LVGLTGGIAS…DCMQFLIIRA (205 aa)) folds into the DPCK domain. 8 to 15 (GGIASGKS) is an ATP binding site.

It belongs to the CoaE family.

The protein is Dephospho-CoA kinase domain-containing protein (dcakd) of Danio rerio (Zebrafish).